A 550-amino-acid chain; its full sequence is Eukaryotic translation initiation factor 3 subunit D-2 (550 aa).

The tract at residues 97–126 is disordered; the sequence is RGRGFRPSVHNNPRNVRNQRGRKGNAMGNI. The RNA gate stretch occupies residues 287-301; it reads KFDMLTVNETSQEPP. The segment at 530-550 is disordered; the sequence is SDVSEEEESSEDKPFGLSMNN.

It belongs to the eIF-3 subunit D family. Component of the eukaryotic translation initiation factor 3 (eIF-3) complex. The eIF-3 complex interacts with pix.

It is found in the cytoplasm. Its function is as follows. mRNA cap-binding component of the eukaryotic translation initiation factor 3 (eIF-3) complex, which is involved in protein synthesis of a specialized repertoire of mRNAs and, together with other initiation factors, stimulates binding of mRNA and methionyl-tRNAi to the 40S ribosome. The eIF-3 complex specifically targets and initiates translation of a subset of mRNAs involved in cell proliferation. In the eIF-3 complex, eif3d specifically recognizes and binds the 7-methylguanosine cap of a subset of mRNAs. In Drosophila willistoni (Fruit fly), this protein is Eukaryotic translation initiation factor 3 subunit D-2.